Here is a 188-residue protein sequence, read N- to C-terminus: HGPRTase-like protein (188 aa).

It belongs to the purine/pyrimidine phosphoribosyltransferase family. Archaeal HPRT subfamily.

In terms of biological role, may catalyze a purine salvage reaction, the substrate is unknown. This Halobacterium salinarum (strain ATCC 29341 / DSM 671 / R1) protein is HGPRTase-like protein.